We begin with the raw amino-acid sequence, 583 residues long: Ribosomal lysine N-methyltransferase 1 (583 aa).

The SET domain occupies Glu-22–Gly-274. Tyr-273 is an S-adenosyl-L-methionine binding site. Coiled-coil stretches lie at residues Lys-378–Ser-407 and Lys-433–His-459.

Belongs to the class V-like SAM-binding methyltransferase superfamily. RKM1 family.

It is found in the cytoplasm. Its subcellular location is the nucleus. In terms of biological role, S-adenosyl-L-methionine-dependent protein-lysine N-methyltransferase that monomethylates ribosomal protein S18 (RPS18A and RPS18B) at 'Lys-48' and dimethylates ribosomal protein L23 (RPL23A and RPL23B) at 'Lys-106' and 'Lys-110'. The polypeptide is Ribosomal lysine N-methyltransferase 1 (Saccharomyces cerevisiae (strain ATCC 204508 / S288c) (Baker's yeast)).